The following is a 42-amino-acid chain: Photosystem I reaction center subunit IX (42 aa).

A helical transmembrane segment spans residues 7-27; it reads YLSVAPVLSTLWFGALAGLLI.

This sequence belongs to the PsaJ family.

The protein localises to the plastid. Its subcellular location is the chloroplast thylakoid membrane. Functionally, may help in the organization of the PsaE and PsaF subunits. The sequence is that of Photosystem I reaction center subunit IX from Agrostis stolonifera (Creeping bentgrass).